Reading from the N-terminus, the 193-residue chain is Phosphoheptose isomerase (193 aa).

The 157-residue stretch at 37-193 (LADSFKAGGK…QLIEKEMVKA (157 aa)) folds into the SIS domain. 52–54 (NGG) serves as a coordination point for substrate. His61 and Glu65 together coordinate Zn(2+). Residues Glu65, 93 to 94 (ND), 119 to 121 (STS), Ser124, and Gln172 contribute to the substrate site. Gln172 and His180 together coordinate Zn(2+).

Belongs to the SIS family. GmhA subfamily. Homotetramer. The cofactor is Zn(2+).

The protein localises to the cytoplasm. It carries out the reaction 2 D-sedoheptulose 7-phosphate = D-glycero-alpha-D-manno-heptose 7-phosphate + D-glycero-beta-D-manno-heptose 7-phosphate. It participates in carbohydrate biosynthesis; D-glycero-D-manno-heptose 7-phosphate biosynthesis; D-glycero-alpha-D-manno-heptose 7-phosphate and D-glycero-beta-D-manno-heptose 7-phosphate from sedoheptulose 7-phosphate: step 1/1. Its pathway is bacterial outer membrane biogenesis; LPS core biosynthesis. In terms of biological role, catalyzes the isomerization of sedoheptulose 7-phosphate in D-glycero-D-manno-heptose 7-phosphate. This Yersinia pestis protein is Phosphoheptose isomerase.